Consider the following 344-residue polypeptide: Phosphate acyltransferase (344 aa).

This sequence belongs to the PlsX family. Homodimer. Probably interacts with PlsY.

The protein localises to the cytoplasm. It catalyses the reaction a fatty acyl-[ACP] + phosphate = an acyl phosphate + holo-[ACP]. It functions in the pathway lipid metabolism; phospholipid metabolism. Its function is as follows. Catalyzes the reversible formation of acyl-phosphate (acyl-PO(4)) from acyl-[acyl-carrier-protein] (acyl-ACP). This enzyme utilizes acyl-ACP as fatty acyl donor, but not acyl-CoA. In Yersinia enterocolitica serotype O:8 / biotype 1B (strain NCTC 13174 / 8081), this protein is Phosphate acyltransferase.